Reading from the N-terminus, the 393-residue chain is Putative B3 domain-containing protein Os06g0632500 (393 aa).

3 DNA-binding regions (TF-B3) span residues 27–123, 141–238, and 316–393; these read LSVP…FDPG, RPRF…FLQN, and NSFT…VQRR.

Its subcellular location is the nucleus. The chain is Putative B3 domain-containing protein Os06g0632500 from Oryza sativa subsp. japonica (Rice).